Consider the following 233-residue polypeptide: Lipoprotein-releasing system ATP-binding protein LolD (233 aa).

Residues 9-233 (LAINAVSKVF…GILSQSETHR (225 aa)) form the ABC transporter domain. 45 to 52 (GSSGSGKS) provides a ligand contact to ATP.

The protein belongs to the ABC transporter superfamily. Lipoprotein translocase (TC 3.A.1.125) family. The complex is composed of two ATP-binding proteins (LolD) and two transmembrane proteins (LolC and LolE).

It localises to the cell inner membrane. Its function is as follows. Part of the ABC transporter complex LolCDE involved in the translocation of mature outer membrane-directed lipoproteins, from the inner membrane to the periplasmic chaperone, LolA. Responsible for the formation of the LolA-lipoprotein complex in an ATP-dependent manner. The chain is Lipoprotein-releasing system ATP-binding protein LolD from Shewanella denitrificans (strain OS217 / ATCC BAA-1090 / DSM 15013).